The following is a 1506-amino-acid chain: Condensin-2 complex subunit D3 (1506 aa).

The disordered stretch occupies residues 154 to 194 (SNLTQKRKKDHSKSSKDNYRKSRKRGKPPRKEDYQVDELSR). 3 HEAT repeats span residues 442-476 (HKFFVQEIIFDRCLDKAPTVRSKALSSFAHCLELS), 532-567 (PGERCFMTMLRKRIKDEKINVRKSALQVLMSILKHC), and 574-605 (QDLLILQDHCRDPAISVRKQALQSLTELVMAQ). Position 562 is a phosphoserine (serine 562). Polar residues predominate over residues 884 to 897 (SDHLPSSQGTTDAL). The disordered stretch occupies residues 884–908 (SDHLPSSQGTTDALDSQPPFQPRSS). Residues 968–1004 (TVMVDNYIPNISVCLKDSDPFIRKQTLVLLTNLLQEE) form an HEAT 4 repeat. Residues 1213 to 1270 (ALRELMNYLREVMQDYRDEINDFFAVDKQLASELEYDMKKYNEQLAQEQALTEHANAT) adopt a coiled-coil conformation. The tract at residues 1317-1353 (QDNADVPPTQSRPSAPRSNFTPTLPPISENGPLKIMS) is disordered. A compositionally biased stretch (polar residues) spans 1324–1338 (PTQSRPSAPRSNFTP). Serine 1359, serine 1368, serine 1381, and serine 1393 each carry phosphoserine. Disordered stretches follow at residues 1385-1412 (LPFNVETGSPENPSSHESSLSLEKESDR) and 1473-1506 (PQSPQWNVKSPARSHGSTRSSRRSLRKAPLKTAN). A compositionally biased stretch (low complexity) spans 1393–1405 (SPENPSSHESSLS). Over residues 1492-1506 (SSRRSLRKAPLKTAN) the composition is skewed to basic residues.

In terms of assembly, component of the condensin-2 complex, which contains the SMC2 and SMC4 heterodimer, and 3 non SMC subunits that probably regulate the complex: NCAPH2, NCAPD3 and NCAPG2.

It is found in the nucleus. Functionally, regulatory subunit of the condensin-2 complex, a complex which establishes mitotic chromosome architecture and is involved in physical rigidity of the chromatid axis. May promote the resolution of double-strand DNA catenanes (intertwines) between sister chromatids. Condensin-mediated compaction likely increases tension in catenated sister chromatids, providing directionality for type II topoisomerase-mediated strand exchanges toward chromatid decatenation. Specifically required for decatenation of centromeric ultrafine DNA bridges during anaphase. Early in neurogenesis, may play an essential role to ensure accurate mitotic chromosome condensation in neuron stem cells, ultimately affecting neuron pool and cortex size. This Mus musculus (Mouse) protein is Condensin-2 complex subunit D3 (Ncapd3).